A 308-amino-acid polypeptide reads, in one-letter code: N-acetylmuramic acid 6-phosphate etherase (308 aa).

Residues 63-226 form the SIS domain; that stretch reads IVDAFACGGR…STASMIRSGK (164 aa). Residue Glu91 is the Proton donor of the active site. The active site involves Glu122.

It belongs to the GCKR-like family. MurNAc-6-P etherase subfamily. As to quaternary structure, homodimer.

The catalysed reaction is N-acetyl-D-muramate 6-phosphate + H2O = N-acetyl-D-glucosamine 6-phosphate + (R)-lactate. The protein operates within amino-sugar metabolism; 1,6-anhydro-N-acetylmuramate degradation. It functions in the pathway amino-sugar metabolism; N-acetylmuramate degradation. Its pathway is cell wall biogenesis; peptidoglycan recycling. Its function is as follows. Specifically catalyzes the cleavage of the D-lactyl ether substituent of MurNAc 6-phosphate, producing GlcNAc 6-phosphate and D-lactate. Together with AnmK, is also required for the utilization of anhydro-N-acetylmuramic acid (anhMurNAc) either imported from the medium or derived from its own cell wall murein, and thus plays a role in cell wall recycling. This chain is N-acetylmuramic acid 6-phosphate etherase, found in Colwellia psychrerythraea (strain 34H / ATCC BAA-681) (Vibrio psychroerythus).